The following is a 767-amino-acid chain: Protein transport protein Sec23B (767 aa).

At Ala2 the chain carries N-acetylalanine. Residues Cys61, Cys66, Cys85, and Cys88 each coordinate Zn(2+). Position 564 is an N6-acetyllysine (Lys564). One copy of the Gelsolin-like repeat lies at 634-720 (PEPVLLDSSS…EHGGSQARFL (87 aa)).

Belongs to the SEC23/SEC24 family. SEC23 subfamily. In terms of assembly, COPII is composed of at least five proteins: the Sec23/24 complex, the Sec13/31 complex and Sar1. Interacts with SAR1A.

It is found in the cytoplasmic vesicle. The protein resides in the COPII-coated vesicle membrane. Its subcellular location is the endoplasmic reticulum membrane. The protein localises to the cytoplasm. It localises to the cytosol. Its function is as follows. Component of the coat protein complex II (COPII) which promotes the formation of transport vesicles from the endoplasmic reticulum (ER). The coat has two main functions, the physical deformation of the endoplasmic reticulum membrane into vesicles and the selection of cargo molecules for their transport to the Golgi complex. The polypeptide is Protein transport protein Sec23B (Mus musculus (Mouse)).